Here is a 324-residue protein sequence, read N- to C-terminus: MGCERKALILMVVIWIMSFWTLSLADISSTEIAVYWGQREDGLLRDTCKTNNYKIVFISFLDKFGCEIRKPELELEGVCGPSVGNPCSFLESQIKECQRMGVKVFLALGGPKGTYSACSADYAKDLAEYLHTYFLSERREGPLGKVALDGIHFDIQKPVDELNWDNLLEELYQIKDVYQSTFLLSAAPGCLSPDEYLDNAIQTRHFDYIFVRFYNDRSCQYSTGNIQRIRNAWLSWTKSVYPRDKNLFLELPASQATAPGGGYIPPSALIGQVLPYLPDLQTRYAGIALWNRQADKETGYSTNIIRYLNATAMPFTSNLLKYPS.

An N-terminal signal peptide occupies residues 1-25 (MGCERKALILMVVIWIMSFWTLSLA). One can recognise a GH18 domain in the interval 30-311 (TEIAVYWGQR…TNIIRYLNAT (282 aa)). N-linked (GlcNAc...) asparagine glycosylation occurs at Asn-309.

It belongs to the glycosyl hydrolase 18 family.

In terms of biological role, may act as a carbohydrate-binding protein. This is Concanavalin B from Canavalia ensiformis (Jack bean).